We begin with the raw amino-acid sequence, 161 residues long: MKLSEISDNPGARKKRMRIGRGIGSGKGKTGGRGGKGQTARSGVRIKGFEGGQMPLHRRLPKRGFNNIFRLEFAEINLDRLQDAIDAKTIDAGAVINAESLVAAGVLRRSRDGVRLLGRGELKAKLTIEVHGATKSAIEAVEKAGGSVKILAPKKDEGEAA.

Residues 1–43 are disordered; it reads MKLSEISDNPGARKKRMRIGRGIGSGKGKTGGRGGKGQTARSG. The span at 21–37 shows a compositional bias: gly residues; sequence RGIGSGKGKTGGRGGKG.

This sequence belongs to the universal ribosomal protein uL15 family. Part of the 50S ribosomal subunit.

Its function is as follows. Binds to the 23S rRNA. The polypeptide is Large ribosomal subunit protein uL15 (Rhodopseudomonas palustris (strain HaA2)).